We begin with the raw amino-acid sequence, 109 residues long: Thioredoxin 2 (109 aa).

The Thioredoxin domain occupies 2-109; that stretch reads SGKYFEATDQ…IAKKLDEHIG (108 aa). Cys33 and Cys36 are oxidised to a cystine.

This sequence belongs to the thioredoxin family.

Participates in various redox reactions through the reversible oxidation of its active center dithiol to a disulfide and catalyzes dithiol-disulfide exchange reactions. This Chlorobaculum tepidum (strain ATCC 49652 / DSM 12025 / NBRC 103806 / TLS) (Chlorobium tepidum) protein is Thioredoxin 2 (trx2).